The sequence spans 546 residues: Chaperonin GroEL (546 aa).

ATP-binding positions include 30-33 (TLGP), Lys51, 87-91 (DGTTT), Gly415, 479-481 (NAA), and Asp495.

It belongs to the chaperonin (HSP60) family. Forms a cylinder of 14 subunits composed of two heptameric rings stacked back-to-back. Interacts with the co-chaperonin GroES.

It localises to the cytoplasm. It catalyses the reaction ATP + H2O + a folded polypeptide = ADP + phosphate + an unfolded polypeptide.. Its function is as follows. Together with its co-chaperonin GroES, plays an essential role in assisting protein folding. The GroEL-GroES system forms a nano-cage that allows encapsulation of the non-native substrate proteins and provides a physical environment optimized to promote and accelerate protein folding. The protein is Chaperonin GroEL of Bordetella avium (strain 197N).